A 183-amino-acid polypeptide reads, in one-letter code: Capsid protein (183 aa).

Positions 136-183 (NAPILSTLPETTVVRRRGRSPRRRTPSPRRRRSQSPRRRRSQSRESQC) are disordered. A compositionally biased stretch (basic residues) spans 149-176 (VRRRGRSPRRRTPSPRRRRSQSPRRRRS). Serine 155, serine 162, and serine 170 each carry phosphoserine; by host. Residues 155-161 (SPRRRTP) form a 1; half-length repeat. Residues 155 to 177 (SPRRRTPSPRRRRSQSPRRRRSQ) form a 3 X 8 AA repeats of S-P-R-R-R-[PR]-S-Q region. The Bipartite nuclear localization signal signature appears at 158–175 (RRTPSPRRRRSQSPRRRR). 2 repeat units span residues 162-169 (SPRRRRSQ) and 170-177 (SPRRRRSQ). Positions 177 to 183 (QSRESQC) are RNA binding.

The protein belongs to the orthohepadnavirus core antigen family. In terms of assembly, homodimerizes, then multimerizes. Interacts with cytosol exposed regions of viral L glycoprotein present in the reticulum-to-Golgi compartment. Interacts with human FLNB. Phosphorylated form interacts with host importin alpha; this interaction depends on the exposure of the NLS, which itself depends upon genome maturation and/or phosphorylation of the capsid protein. Interacts with host NUP153. In terms of processing, phosphorylated by host SRPK1, SRPK2, and maybe protein kinase C or GAPDH. Phosphorylation is critical for pregenomic RNA packaging. Protein kinase C phosphorylation is stimulated by HBx protein and may play a role in transport of the viral genome to the nucleus at the late step during the viral replication cycle.

The protein localises to the virion. It localises to the host cytoplasm. Functionally, self assembles to form an icosahedral capsid. Most capsids appear to be large particles with an icosahedral symmetry of T=4 and consist of 240 copies of capsid protein, though a fraction forms smaller T=3 particles consisting of 180 capsid proteins. Entering capsids are transported along microtubules to the nucleus. Phosphorylation of the capsid is thought to induce exposure of nuclear localization signal in the C-terminal portion of the capsid protein that allows binding to the nuclear pore complex via the importin (karyopherin-) alpha and beta. Capsids are imported in intact form through the nuclear pore into the nuclear basket, where it probably binds NUP153. Only capsids that contain the mature viral genome can release the viral DNA and capsid protein into the nucleoplasm. Immature capsids get stuck in the basket. Capsids encapsulate the pre-genomic RNA and the P protein. Pre-genomic RNA is reverse-transcribed into DNA while the capsid is still in the cytoplasm. The capsid can then either be directed to the nucleus, providing more genomes for transcription, or bud through the endoplasmic reticulum to provide new virions. This Homo sapiens (Human) protein is Capsid protein.